The sequence spans 652 residues: MAEAPQVVETDPDFEPLPRQRSCTWPLPRPEFNQSNSTTSSPAPSGGAAANPDAAASLASASAVSTDFMSNLSLLEESEDFARAPGCVAVAAAAAASRGLCGDFQGPEAGCVHPAPPQPPPTGPLSQPPPVPPSAAAAAGPLAGQPRKTSSSRRNAWGNLSYADLITKAIESSAEKRLTLSQIYEWMVKSVPYFKDKGDSNSSAGWKNSIRHNLSLHSKFIRVQNEGTGKSSWWMLNPEGGKSGKSPRRRAASMDNNSKFAKSRGRAAKKKASLQSGQEGPGDSPGSQFSKWPASPGSHSNDDFDNWSTFRPRTSSNASTISGRLSPIMTEQDDLGDGDVHSLVYPPSAAKMASTLPSLSEISNPENMENLLDNLNLLSSPTSLTVSTQSSPGSMMQQTPCYSFAPPNTSLNSPSPNYSKYTYGQSSMSPLPQMPMQTLQDSKSSYGGLNQYNCAPGLLKELLTSDSPPHNDIMSPVDPGVAQPNSRVLGQNVMMGPNSVMPAYGSQASHNKMMNPSSHTHPGHAQQTASVNGRTLPHVVNTMPHTSAMNRLTPVKTPLQVPLSHPMQMSALGSYSSVSSCNGYGRMGVLHQEKLPSDLDGMFIERLDCDMESIIRNDLMDGDTLDFNFDNVLPNQSFPHSVKTTTHSWVSG.

Disordered stretches follow at residues 1–62 (MAEA…ASAS) and 112–154 (VHPA…SSRR). Residue Thr-24 is modified to Phosphothreonine; by PKB/AKT1 or PKB/AKT2 and SGK1. Positions 35–62 (SNSTTSSPAPSGGAAANPDAAASLASAS) are enriched in low complexity. The span at 114–133 (PAPPQPPPTGPLSQPPPVPP) shows a compositional bias: pro residues. Residues 134–146 (SAAAAAGPLAGQP) are compositionally biased toward low complexity. Residues 156 to 232 (AWGNLSYADL…VQNEGTGKSS (77 aa)) constitute a DNA-binding region (fork-head). DNA-binding regions lie at residues 208–215 (NSIRHNLS) and 231–234 (SSWW). Phosphoserine; by STK4/MST1 is present on Ser-209. Phosphoserine is present on residues Ser-215, Ser-231, and Ser-232. Disordered regions lie at residues 231–342 (SSWW…DVHS) and 383–410 (SLTV…PNTS). An N6-acetyllysine mark is found at Lys-242 and Lys-245. Residue Ser-246 is modified to Phosphoserine; by CDK1. Omega-N-methylarginine; by PRMT1 is present on residues Arg-248 and Arg-250. A Nuclear localization signal motif is present at residues 248–250 (RRR). Ser-253 is modified (phosphoserine; by PKB/AKT1 and SGK1). N6-acetyllysine is present on residues Lys-259, Lys-262, and Lys-271. The span at 261 to 272 (AKSRGRAAKKKA) shows a compositional bias: basic residues. Residues 280–562 (GPGDSPGSQF…TPVKTPLQVP (283 aa)) are sufficient for interaction with NLK. Residues Ser-284 and Ser-295 each carry the phosphoserine modification. Residues 306 to 323 (NWSTFRPRTSSNASTISG) are compositionally biased toward polar residues. The residue at position 316 (Ser-316) is a Phosphoserine; by PKB/AKT1 or PKB/AKT2. The residue at position 319 (Ser-319) is a Phosphoserine; by CK1 and SGK1. Ser-322 carries the post-translational modification Phosphoserine; by CK1. Ser-326 is subject to Phosphoserine. Thr-330 carries the phosphothreonine modification. The tract at residues 360-456 (SEISNPENME…GGLNQYNCAP (97 aa)) is required for interaction with RUNX2. Residues 392–401 (PGSMMQQTPC) are compositionally biased toward polar residues. An N6-acetyllysine modification is found at Lys-420. Residues 459–463 (LKELL) carry the Required for interaction with SIRT1 motif.

In terms of assembly, interacts with EP300 and CREBBP; the interactions acetylate FOXO1. Interacts with the 14-3-3 proteins, YWHAG and YWHAZ; the interactions require insulin-stimulated phosphorylation on Thr-24, promote nuclear exit and loss of transcriptional activity. Interacts with SKP2; the interaction ubiquitinates FOXO1 leading to its proteasomal degradation. Interacts with PMRT1; methylates FOXO1, prevents PKB/AKT1 phosphorylation and retains FOXO1 in the nucleus. Interacts (via an N-terminal domain) with FCOR; the interaction is direct, occurs in a forskolin-independent manner and prevents SIRT1 binding to FOXO1. Interacts (via the C-terminal half) with ATF4 (via its DNA-binding domain); the interaction occurs in osteoblasts, regulates glucose homeostasis via suppression of beta-cell proliferation and subsequent decrease in insulin production. Interacts with RUNX2; the interaction inhibits RUNX2 transcriptional activity and mediates the IGF1/insulin-dependent BGLAP expression in osteoblasts. Interacts with PPP2R1A; the interaction regulates the dephosphorylation of FOXO1 at Thr-24 and Ser-253 leading to its nuclear import. Binds to CDK1. Interacts with LRPPRC. Interacts with RUNX2; the interaction inhibits RUNX2 transcriptional activity and mediates the IGF1/insulin-dependent BGLAP expression in osteoblasts. Interacts with NLK. Interacts with SIRT1; the interaction results in the deacetylation of FOXO1 leading to activation of FOXO1-mediated transcription of genes involved in DNA repair and stress resistance. The interaction requires the presence of KRIT1 and is inhibited by FCOR. Interacts with SIRT2; the interaction is disrupted in response to oxidative stress or serum deprivation, leading to increased level of acetylated FOXO1, which promotes stress-induced autophagy by stimulating E1-like activating enzyme ATG7. Interacts (acetylated form) with ATG7; the interaction is increased in response to oxidative stress or serum deprivation and promotes the autophagic process leading to cell death. Interacts (acetylated form) with PPARG. Interacts with XBP1 isoform 2; this interaction is direct and leads to FOXO1 ubiquitination and degradation via the proteasome pathway. Interacts (via the Fork-head domain) with CEBPA; the interaction increases when FOXO1 is deacetylated. Interacts with WDFY2. Forms a complex with WDFY2 and AKT1. Interacts with CRY1. Interacts with PPIA/CYPA; the interaction promotes FOXO1 dephosphorylation, nuclear accumulation and transcriptional activity. Interacts with TOX4; FOXO1 is required for full induction of TOX4-dependent activity and the interaction is inhibited by insulin. Interacts (when phosphorylated on Ser-253) with STUB1/CHIP. In terms of processing, phosphorylation by NLK promotes nuclear export and inhibits the transcriptional activity. In response to growth factors, phosphorylation on Thr-24, Ser-253 and Ser-319 by PKB/AKT1 promotes nuclear export and inactivation of transactivational activity. Phosphorylation on Thr-24 is required for binding 14-3-3 proteins. Phosphorylation of Ser-253 decreases DNA-binding activity and promotes the phosphorylation of Thr-24 and Ser-316, permitting phosphorylation of Ser-319 and Ser-322, probably by CDK1, leading to nuclear exclusion and loss of function. Stress signals, such as response to oxygen or nitric oxide, attenuate the PKB/AKT1-mediated phosphorylation leading to nuclear retention. Phosphorylation of Ser-326 is independent of IGF1 and leads to reduced function. Dephosphorylated on Thr-24 and Ser-253 by PP2A in beta-cells under oxidative stress leading to nuclear retention. Phosphorylation of Ser-246 by CDK1 disrupts binding of 14-3-3 proteins leading to nuclear accumulation and has no effect on DNA-binding nor transcriptional activity. Phosphorylation by STK4/MST1 on Ser-209, upon oxidative stress, inhibits binding to 14-3-3 proteins and nuclear export. PPIA/CYPA promotes its dephosphorylation on Ser-253. Ubiquitinated by SKP2. Ubiquitinated, leading to proteasomal degradation. Ubiquitinated by STUB1/CHIP; when Ser-253 is phosphorylated. Post-translationally, methylation inhibits PKB/AKT1-mediated phosphorylation at Ser-253, promoting nuclear retention and increasing the transcriptional activity and cell death. Methylation increased by oxidative stress. In terms of processing, acetylation at Lys-259 and Lys-271 are necessary for autophagic cell death induction. Deacetylated by SIRT2 in response to oxidative stress or serum deprivation, thereby negatively regulating FOXO1-mediated autophagic cell death. Once in the nucleus, acetylated by CREBBP/EP300. Acetylation diminishes the interaction with target DNA and attenuates the transcriptional activity. It increases the phosphorylation at Ser-253, and is required for the transcriptional inhibition by FCOR. Deacetylation by SIRT1 results in reactivation of the transcriptional activity. Acetylation of FOXO1 diminishes its binding to PPARG in adipocytes. Deacetylated by SIRT2; deacetylation of FOXO1 directly increases its repressive binding to PPARG and inhibits adipocyte differentiation. Oxidative stress by hydrogen peroxide treatment appears to promote deacetylation and uncoupling of insulin-induced phosphorylation. By contrast, resveratrol acts independently of acetylation. Acetylated at Lys-420, promoting its localization to the nucleus and transcription factor activity. Deacetylation at Lys-420 by SIRT6, promotes its translocation into the cytoplasm, preventing its transcription factor activity. Deacetylation and subsequent inhibition by SIRT6 has different effects depending on cell types: it inhibits gluconeogenesis in hepatocytes, promotes glucose sensing in pancreatic beta-cells and regulates lipid catabolism in brown adipocytes. In terms of tissue distribution, expressed in liver, white and brown adipose tissues (at protein level).

The protein resides in the cytoplasm. The protein localises to the nucleus. Its function is as follows. Transcription factor that is the main target of insulin signaling and regulates metabolic homeostasis in response to oxidative stress. Binds to the insulin response element (IRE) with consensus sequence 5'-TT[G/A]TTTTG-3' and the related Daf-16 family binding element (DBE) with consensus sequence 5'-TT[G/A]TTTAC-3'. Activity suppressed by insulin. Main regulator of redox balance and osteoblast numbers and controls bone mass. Orchestrates the endocrine function of the skeleton in regulating glucose metabolism. Also acts as a key regulator of chondrogenic commitment of skeletal progenitor cells in response to lipid availability: when lipids levels are low, translocates to the nucleus and promotes expression of SOX9, which induces chondrogenic commitment and suppresses fatty acid oxidation. Acts synergistically with ATF4 to suppress osteocalcin/BGLAP activity, increasing glucose levels and triggering glucose intolerance and insulin insensitivity. Also suppresses the transcriptional activity of RUNX2, an upstream activator of osteocalcin/BGLAP. Acts as an inhibitor of glucose sensing in pancreatic beta cells by acting as a transcription repressor and suppressing expression of PDX1. In hepatocytes, promotes gluconeogenesis by acting together with PPARGC1A and CEBPA to activate the expression of genes such as IGFBP1, G6PC1 and PCK1. Also promotes gluconeogenesis by directly promoting expression of PPARGC1A and G6PC1. Important regulator of cell death acting downstream of CDK1, PKB/AKT1 and STK4/MST1. Promotes neural cell death. Mediates insulin action on adipose tissue. Regulates the expression of adipogenic genes such as PPARG during preadipocyte differentiation and, adipocyte size and adipose tissue-specific gene expression in response to excessive calorie intake. Regulates the transcriptional activity of GADD45A and repair of nitric oxide-damaged DNA in beta-cells. Required for the autophagic cell death induction in response to starvation or oxidative stress in a transcription-independent manner. Mediates the function of MLIP in cardiomyocytes hypertrophy and cardiac remodeling. Positive regulator of apoptosis in cardiac smooth muscle cells as a result of its transcriptional activation of pro-apoptotic genes. Regulates endothelial cell (EC) viability and apoptosis in a PPIA/CYPA-dependent manner via transcription of CCL2 and BCL2L11 which are involved in EC chemotaxis and apoptosis. This is Forkhead box protein O1 (Foxo1) from Mus musculus (Mouse).